The chain runs to 239 residues: Serine protease SplF (239 aa).

An N-terminal signal peptide occupies residues 1-36 (MNKNIIIKSIGALTILTSITGVGTTMVEGIQQTAKA). Active-site charge relay system residues include H75, D114, and S192.

This sequence belongs to the peptidase S1B family.

Its subcellular location is the secreted. The chain is Serine protease SplF (splF) from Staphylococcus aureus (strain USA300).